Reading from the N-terminus, the 251-residue chain is Tyrosine transport ATP-binding protein (251 aa).

One can recognise an ABC transporter domain in the interval 2 to 248 (LQIKNLSKSF…TVEEILEKFE (247 aa)). An ATP-binding site is contributed by 39–46 (GSNGTGKS).

Belongs to the ABC transporter superfamily. As to quaternary structure, the complex is probably composed of two ATP-binding proteins (CDR20291_0806), two transmembrane proteins (CDR20291_0807) and a solute-binding protein (CDR20291_0805).

The protein localises to the cell membrane. The enzyme catalyses L-tyrosine(out) + ATP + H2O = L-tyrosine(in) + ADP + phosphate + H(+). In terms of biological role, probably part of an ABC transporter complex involved in tyrosine uptake. May also import phenylalanine. Probably responsible for energy coupling to the transport system. The polypeptide is Tyrosine transport ATP-binding protein (Clostridioides difficile (strain R20291) (Peptoclostridium difficile)).